The following is a 513-amino-acid chain: Histidine ammonia-lyase (513 aa).

Positions 144–146 (ASG) form a cross-link, 5-imidazolinone (Ala-Gly). The residue at position 145 (Ser145) is a 2,3-didehydroalanine (Ser).

It belongs to the PAL/histidase family. Contains an active site 4-methylidene-imidazol-5-one (MIO), which is formed autocatalytically by cyclization and dehydration of residues Ala-Ser-Gly.

The protein resides in the cytoplasm. It carries out the reaction L-histidine = trans-urocanate + NH4(+). It functions in the pathway amino-acid degradation; L-histidine degradation into L-glutamate; N-formimidoyl-L-glutamate from L-histidine: step 1/3. The polypeptide is Histidine ammonia-lyase (Streptococcus pyogenes serotype M3 (strain ATCC BAA-595 / MGAS315)).